Reading from the N-terminus, the 144-residue chain is 3-dehydroquinate dehydratase (144 aa).

Catalysis depends on Tyr22, which acts as the Proton acceptor. Asn73, His79, and Asp86 together coordinate substrate. His99 serves as the catalytic Proton donor. Substrate-binding positions include 100–101 and Arg110; that span reads LS.

This sequence belongs to the type-II 3-dehydroquinase family. As to quaternary structure, homododecamer.

It carries out the reaction 3-dehydroquinate = 3-dehydroshikimate + H2O. Its pathway is metabolic intermediate biosynthesis; chorismate biosynthesis; chorismate from D-erythrose 4-phosphate and phosphoenolpyruvate: step 3/7. Functionally, catalyzes a trans-dehydration via an enolate intermediate. This chain is 3-dehydroquinate dehydratase, found in Herpetosiphon aurantiacus (strain ATCC 23779 / DSM 785 / 114-95).